Here is a 122-residue protein sequence, read N- to C-terminus: S-adenosylmethionine decarboxylase proenzyme (122 aa).

S61 (schiff-base intermediate with substrate; via pyruvic acid) is an active-site residue. Position 61 is a pyruvic acid (Ser); by autocatalysis (S61). Residue H66 is the Proton acceptor; for processing activity of the active site. The Proton donor; for catalytic activity role is filled by C81.

It belongs to the prokaryotic AdoMetDC family. Type 1 subfamily. In terms of assembly, heterotetramer of two alpha and two beta chains arranged as a dimer of alpha/beta heterodimers. Requires pyruvate as cofactor. Is synthesized initially as an inactive proenzyme. Formation of the active enzyme involves a self-maturation process in which the active site pyruvoyl group is generated from an internal serine residue via an autocatalytic post-translational modification. Two non-identical subunits are generated from the proenzyme in this reaction, and the pyruvate is formed at the N-terminus of the alpha chain, which is derived from the carboxyl end of the proenzyme. The post-translation cleavage follows an unusual pathway, termed non-hydrolytic serinolysis, in which the side chain hydroxyl group of the serine supplies its oxygen atom to form the C-terminus of the beta chain, while the remainder of the serine residue undergoes an oxidative deamination to produce ammonia and the pyruvoyl group blocking the N-terminus of the alpha chain.

It catalyses the reaction S-adenosyl-L-methionine + H(+) = S-adenosyl 3-(methylsulfanyl)propylamine + CO2. The protein operates within amine and polyamine biosynthesis; S-adenosylmethioninamine biosynthesis; S-adenosylmethioninamine from S-adenosyl-L-methionine: step 1/1. In terms of biological role, catalyzes the decarboxylation of S-adenosylmethionine to S-adenosylmethioninamine (dcAdoMet), the propylamine donor required for the synthesis of the polyamines spermine and spermidine from the diamine putrescine. The sequence is that of S-adenosylmethionine decarboxylase proenzyme from Prochlorococcus marinus (strain MIT 9211).